A 293-amino-acid polypeptide reads, in one-letter code: Probable E3 ubiquitin-protein ligase RNF144A-B (293 aa).

The segment at 16–237 is TRIAD supradomain; sequence PLLSCKLCLG…YDKGPCRNKL (222 aa). Zn(2+) contacts are provided by cysteine 20, cysteine 23, cysteine 43, cysteine 46, cysteine 111, cysteine 116, cysteine 135, cysteine 138, cysteine 143, cysteine 146, histidine 151, cysteine 156, cysteine 186, and cysteine 189. The RING-type 1 zinc finger occupies 20–70; it reads CKLCLGEFPLEQMTTISQCQCIFCSLCLKQYVELLIKEGLETAISCPDSAC. The IBR-type zinc-finger motif lies at 91 to 156; it reads QHYKRLQFER…RADCHTGQAC (66 aa). An RING-type 2; atypical zinc finger spans residues 186–215; sequence CPKCKVYIERDEGCAQMMCKNCKHAFCWYC. Cysteine 199 is a catalytic residue. Positions 204, 207, 212, 215, 227, and 233 each coordinate Zn(2+). A helical membrane pass occupies residues 251–271; it reads VVGIFAGFGLLLLVASPFLLL.

Belongs to the RBR family. RNF144 subfamily.

It is found in the membrane. The enzyme catalyses [E2 ubiquitin-conjugating enzyme]-S-ubiquitinyl-L-cysteine + [acceptor protein]-L-lysine = [E2 ubiquitin-conjugating enzyme]-L-cysteine + [acceptor protein]-N(6)-ubiquitinyl-L-lysine.. Its pathway is protein modification; protein ubiquitination. Its function is as follows. E3 ubiquitin-protein ligase which accepts ubiquitin from E2 ubiquitin-conjugating enzymes ube2l3 and ube2l6 in the form of a thioester and then directly transfers the ubiquitin to targeted substrates. This chain is Probable E3 ubiquitin-protein ligase RNF144A-B (rnf144ab), found in Danio rerio (Zebrafish).